The following is a 697-amino-acid chain: Serotransferrin (697 aa).

The signal sequence occupies residues 1 to 19 (MRLTVGALLACAALGLCLA). 2 Transferrin-like domains span residues 25 to 347 (VKWC…NQQE) and 360 to 682 (VKWC…NMRK). Intrachain disulfides connect Cys28–Cys67 and Cys38–Cys58. Arg42 carries the post-translational modification Dimethylated arginine. Fe(3+) is bound by residues Asp82 and Tyr114. 8 disulfides stabilise this stretch: Cys137/Cys213, Cys156/Cys350, Cys177/Cys193, Cys180/Cys196, Cys190/Cys198, Cys246/Cys260, Cys363/Cys395, and Cys373/Cys386. 4 residues coordinate hydrogencarbonate: Thr139, Arg143, Ala145, and Gly146. Fe(3+) is bound at residue Tyr207. His268 serves as a coordination point for Fe(3+). Position 388 is a phosphoserine (Ser388). Fe(3+)-binding residues include Asp410 and Tyr448. Intrachain disulfides connect Cys420/Cys692, Cys435/Cys655, Cys472/Cys543, Cys496/Cys683, Cys506/Cys520, Cys517/Cys526, Cys583/Cys597, and Cys633/Cys638. The hydrogencarbonate site is built by Thr474, Arg478, Ala480, and Gly481. The N-linked (GlcNAc...) asparagine glycan is linked to Asn513. Tyr537 contributes to the Fe(3+) binding site. His605 contributes to the Fe(3+) binding site. Position 684 is a phosphoserine (Ser684).

It belongs to the transferrin family. Monomer. Part of a complex composed of SLC40A1/ferroportin, TF/transferrin and HEPH/hephaestin that transfers iron from cells to transferrin. As to expression, expressed by the liver and secreted in plasma.

It is found in the secreted. Its function is as follows. Transferrins are iron binding transport proteins which can bind two Fe(3+) ions in association with the binding of an anion, usually bicarbonate. It is responsible for the transport of iron from sites of absorption and heme degradation to those of storage and utilization. Serum transferrin may also have a further role in stimulating cell proliferation. This Mus musculus (Mouse) protein is Serotransferrin (Tf).